A 419-amino-acid chain; its full sequence is Tyrosine--tRNA ligase (419 aa).

Residue Tyr-34 coordinates L-tyrosine. The 'HIGH' region motif lies at 39-48; that stretch reads PTADSLHLGH. The L-tyrosine site is built by Tyr-169 and Gln-173. The 'KMSKS' region motif lies at 229–233; that stretch reads KFGKS. An ATP-binding site is contributed by Lys-232. The 68-residue stretch at 352–419 folds into the S4 RNA-binding domain; it reads LNIIDLLVTS…KKKYFVLNFK (68 aa).

The protein belongs to the class-I aminoacyl-tRNA synthetase family. TyrS type 1 subfamily. Homodimer.

Its subcellular location is the cytoplasm. It carries out the reaction tRNA(Tyr) + L-tyrosine + ATP = L-tyrosyl-tRNA(Tyr) + AMP + diphosphate + H(+). In terms of biological role, catalyzes the attachment of tyrosine to tRNA(Tyr) in a two-step reaction: tyrosine is first activated by ATP to form Tyr-AMP and then transferred to the acceptor end of tRNA(Tyr). In Streptococcus agalactiae serotype Ia (strain ATCC 27591 / A909 / CDC SS700), this protein is Tyrosine--tRNA ligase.